The following is a 204-amino-acid chain: UPF0637 protein USA300HOU_1046.1 (204 aa).

This sequence belongs to the UPF0637 family.

This chain is UPF0637 protein USA300HOU_1046.1, found in Staphylococcus aureus (strain USA300 / TCH1516).